The sequence spans 162 residues: Phosphopantetheine adenylyltransferase (162 aa).

Serine 11 is a substrate binding site. ATP contacts are provided by residues 11 to 12 and histidine 19; that span reads SF. Substrate-binding residues include lysine 43, threonine 75, and arginine 89. ATP-binding positions include 90 to 92, glutamate 100, and 125 to 131; these read GLR and YAFLSSS.

Belongs to the bacterial CoaD family. As to quaternary structure, homohexamer. It depends on Mg(2+) as a cofactor.

The protein localises to the cytoplasm. The enzyme catalyses (R)-4'-phosphopantetheine + ATP + H(+) = 3'-dephospho-CoA + diphosphate. It participates in cofactor biosynthesis; coenzyme A biosynthesis; CoA from (R)-pantothenate: step 4/5. In terms of biological role, reversibly transfers an adenylyl group from ATP to 4'-phosphopantetheine, yielding dephospho-CoA (dPCoA) and pyrophosphate. This chain is Phosphopantetheine adenylyltransferase, found in Finegoldia magna (strain ATCC 29328 / DSM 20472 / WAL 2508) (Peptostreptococcus magnus).